Here is a 411-residue protein sequence, read N- to C-terminus: Trigger factor (411 aa).

The PPIase FKBP-type domain maps to 162–240 (EDLVVIDYTT…IKEVKRRQNI (79 aa)).

Belongs to the FKBP-type PPIase family. Tig subfamily.

Its subcellular location is the cytoplasm. The catalysed reaction is [protein]-peptidylproline (omega=180) = [protein]-peptidylproline (omega=0). Involved in protein export. Acts as a chaperone by maintaining the newly synthesized protein in an open conformation. Functions as a peptidyl-prolyl cis-trans isomerase. The protein is Trigger factor of Thermodesulfovibrio yellowstonii (strain ATCC 51303 / DSM 11347 / YP87).